The primary structure comprises 37 residues: MKVRPSVKPICEKCKVIRRRGKVMVICENPKHKQRQG.

The protein belongs to the bacterial ribosomal protein bL36 family.

The sequence is that of Large ribosomal subunit protein bL36 (rpmJ) from Geobacillus stearothermophilus (Bacillus stearothermophilus).